Consider the following 494-residue polypeptide: Serine/arginine-rich splicing factor 4 (494 aa).

Residues 2–72 form the RRM 1 domain; that stretch reads PRVYIGRLSY…ERVIVEHARG (71 aa). Disordered stretches follow at residues 72–95 and 169–494; these read GPRRDGSYGSGRSGYGYRRSGRDK and KIRL…HSRS. Phosphoserine is present on residues S78 and S84. The RRM 2 domain maps to 104-177; sequence YRLIVENLSS…RKIRLVEDKP (74 aa). 2 stretches are compositionally biased toward basic residues: residues 179-206 and 214-246; these read SRRRRSYSRSRSHSRSRSRSRHSRKSRS and SHSKSRSRSRSGSRSRSKSRSRSQSRSRSKKEK. Basic and acidic residues predominate over residues 247–256; sequence SRSPSKEKSR. Residues 257 to 267 are compositionally biased toward basic residues; the sequence is SRSHSAGKSRS. Residues 268–278 show a composition bias toward basic and acidic residues; the sequence is KSKDQAEEKIQ. Basic residues predominate over residues 286-302; it reads PKSRSPSRHKSKSKSRS. Residues S288, S290, and S292 each carry the phosphoserine modification. Residues 303 to 327 are compositionally biased toward basic and acidic residues; that stretch reads RSQERRVEEEKRGSVSRGRSQEKSL. Composition is skewed to basic residues over residues 328–359 and 367–382; these read RQSRSRSRSKGGSRSRSRSRSKSKDKRKGRKR and RSRSRSKSERSRKRGS. Basic and acidic residues predominate over residues 411–431; sequence VSKEREHAKSESSQREGRGES. S431, S446, S456, S458, and S460 each carry phosphoserine. A compositionally biased stretch (low complexity) spans 449-460; the sequence is KSKPNLPSESRS. A compositionally biased stretch (basic residues) spans 461–494; it reads RSKSASKTRSRSKSRSRSASRSPSRSRSRSHSRS.

It belongs to the splicing factor SR family. As to quaternary structure, found in a pre-mRNA splicing complex with SRSF4/SFRS4, SRSF5/SFRS5, SNRNP70, SNRPA1, SRRM1 and SRRM2. Interacts with PNN. Post-translationally, extensively phosphorylated on serine residues in the RS domain.

Its subcellular location is the nucleus speckle. Its function is as follows. Plays a role in alternative splice site selection during pre-mRNA splicing. Represses the splicing of MAPT/Tau exon 10. This chain is Serine/arginine-rich splicing factor 4 (SRSF4), found in Homo sapiens (Human).